The chain runs to 454 residues: tRNA modification GTPase MnmE (454 aa).

(6S)-5-formyl-5,6,7,8-tetrahydrofolate-binding residues include Arg23, Glu80, and Lys120. The 162-residue stretch at 216 to 377 (GMKVVIAGRP…LRNHLKQSMG (162 aa)) folds into the TrmE-type G domain. K(+) is bound at residue Asn226. GTP contacts are provided by residues 226–231 (NAGKSS), 245–251 (TDIAGTT), 270–273 (DTAG), and 335–338 (NKAD). Mg(2+) is bound at residue Ser230. Thr245, Ile247, and Thr250 together coordinate K(+). Thr251 is a Mg(2+) binding site. Lys454 contributes to the (6S)-5-formyl-5,6,7,8-tetrahydrofolate binding site.

It belongs to the TRAFAC class TrmE-Era-EngA-EngB-Septin-like GTPase superfamily. TrmE GTPase family. As to quaternary structure, homodimer. Heterotetramer of two MnmE and two MnmG subunits. K(+) is required as a cofactor.

Its subcellular location is the cytoplasm. Exhibits a very high intrinsic GTPase hydrolysis rate. Involved in the addition of a carboxymethylaminomethyl (cmnm) group at the wobble position (U34) of certain tRNAs, forming tRNA-cmnm(5)s(2)U34. The protein is tRNA modification GTPase MnmE of Escherichia coli O157:H7.